We begin with the raw amino-acid sequence, 921 residues long: Probable TonB-dependent receptor NMB1497 (921 aa).

The first 25 residues, 1-25, serve as a signal peptide directing secretion; it reads MRSSFRLKPICFYLMGVTLYHYSYA. A TBDR plug domain is found at 53 to 174; it reads DKKVFTDARA…LAGSANLRTL (122 aa). One can recognise a TBDR beta-barrel domain in the interval 185 to 921; sequence TYGLLLKGLT…TFLMTMSYKF (737 aa). The short motif at 904–921 is the TonB C-terminal box element; sequence LTNFARGRTFLMTMSYKF.

The protein belongs to the TonB-dependent receptor family.

It localises to the cell outer membrane. Probable receptor, TonB-dependent. This chain is Probable TonB-dependent receptor NMB1497, found in Neisseria meningitidis serogroup B (strain ATCC BAA-335 / MC58).